Reading from the N-terminus, the 442-residue chain is MENAKMNSLIAQYPLVKDLVALKETTWFNPGTTSLAEGLPYVGLTEQDVQDAHARLSRFAPYLAKAFPETAATGGIIESELVAIPAMQKRLEKEYQQPISGQLLLKKDSHLPISGSIKARGGIYEVLAHAEKLALEAGLLTLDDDYSKLLSPEFKQFFSQYSIAVGSTGNLGLSIGIMSARIGFKVTVHMSADARAWKKAKLRSHGVTVVEYEQDYGVAVEEGRKAAQSDPNCFFIDDENSRTLFLGYSVAGQRLKAQFAQQGRIVDADNPLFVYLPCGVGGGPGGVAFGLKLAFGDHVHCFFAEPTHSPCMLLGVHTGLHDQISVQDIGIDNLTAADGLAVGRASGFVGRAMERLLDGFYTLSDQTMYDMLGWLAQEEGIRLEPSALAGMAGPQRVCASVSYQQMHGFSAEQLRNTTHLVWATGGGMVPEEEMNQYLAKGR.

Lys118 is modified (N6-(pyridoxal phosphate)lysine).

It belongs to the serine/threonine dehydratase family. DsdA subfamily. As to quaternary structure, monomer. Pyridoxal 5'-phosphate serves as cofactor.

It catalyses the reaction D-serine = pyruvate + NH4(+). This chain is D-serine dehydratase, found in Escherichia coli (strain K12 / MC4100 / BW2952).